The sequence spans 58 residues: Photosystem II reaction center X protein (58 aa).

Residues Ile-27 to Trp-47 traverse the membrane as a helical segment.

This sequence belongs to the PsbX family. Type 2 subfamily. As to quaternary structure, PSII consists of a core antenna complex that captures photons, and an electron transfer chain that converts photonic excitation into a charge separation. PSII forms dimeric complexes.

The protein resides in the cellular thylakoid membrane. Its function is as follows. Involved in the binding and/or turnover of quinones at the Q(B) site of Photosystem II. This is Photosystem II reaction center X protein from Prochlorococcus marinus (strain MIT 9211).